The chain runs to 54 residues: Photosystem II reaction center protein K (54 aa).

A propeptide spanning residues 1 to 17 is cleaved from the precursor; it reads MSFITLNNFFNTNTFFG. A helical membrane pass occupies residues 29 to 49; that stretch reads LIDVLPIIPVLFFLLAFVWQA.

The protein belongs to the PsbK family. PSII is composed of 1 copy each of membrane proteins PsbA, PsbB, PsbC, PsbD, PsbE, PsbF, PsbH, PsbI, PsbJ, PsbK, PsbL, PsbM, PsbT, PsbY, PsbZ, Psb30/Ycf12, at least 3 peripheral proteins of the oxygen-evolving complex and a large number of cofactors. It forms dimeric complexes.

The protein localises to the plastid. It localises to the chloroplast thylakoid membrane. In terms of biological role, one of the components of the core complex of photosystem II (PSII). PSII is a light-driven water:plastoquinone oxidoreductase that uses light energy to abstract electrons from H(2)O, generating O(2) and a proton gradient subsequently used for ATP formation. It consists of a core antenna complex that captures photons, and an electron transfer chain that converts photonic excitation into a charge separation. In Euglena gracilis, this protein is Photosystem II reaction center protein K.